We begin with the raw amino-acid sequence, 304 residues long: Putative S-adenosyl-L-methionine-dependent methyltransferase MAV_4444 (304 aa).

Residues Asp130 and 159–160 contribute to the S-adenosyl-L-methionine site; that span reads DL.

Belongs to the UPF0677 family.

Functionally, exhibits S-adenosyl-L-methionine-dependent methyltransferase activity. This Mycobacterium avium (strain 104) protein is Putative S-adenosyl-L-methionine-dependent methyltransferase MAV_4444.